Here is an 85-residue protein sequence, read N- to C-terminus: Translation initiation factor IF-1 1 (85 aa).

The region spanning 1 to 72 (MAKEELIEMS…SKGRITFRHL (72 aa)) is the S1-like domain.

Belongs to the IF-1 family. As to quaternary structure, component of the 30S ribosomal translation pre-initiation complex which assembles on the 30S ribosome in the order IF-2 and IF-3, IF-1 and N-formylmethionyl-tRNA(fMet); mRNA recruitment can occur at any time during PIC assembly.

It is found in the cytoplasm. In terms of biological role, one of the essential components for the initiation of protein synthesis. Stabilizes the binding of IF-2 and IF-3 on the 30S subunit to which N-formylmethionyl-tRNA(fMet) subsequently binds. Helps modulate mRNA selection, yielding the 30S pre-initiation complex (PIC). Upon addition of the 50S ribosomal subunit IF-1, IF-2 and IF-3 are released leaving the mature 70S translation initiation complex. The protein is Translation initiation factor IF-1 1 of Aromatoleum aromaticum (strain DSM 19018 / LMG 30748 / EbN1) (Azoarcus sp. (strain EbN1)).